We begin with the raw amino-acid sequence, 472 residues long: MNVTVSNEVTDELLGPFELSDDITLMDFMALIDFDENEQALWHNMRQLKSVDREKTLMQLGIVGESLVVVKAIKKKATEGSTTRASKASAKAAKAAAKAAAVARDTPAEQATTVSPVAQVPVAVSPAVTAAVPTQPTSPSGGPAAANDIITPEDEYIETFRKSLLNSPSLASNIPIPGVNQLIQDSQLFKQLIGPVLLHRRAQQQAANQMGTAQSEYVKLMSNPDDPSNQARISELINQQEIDEQLHKAMEYTPEVFASVNMLYINMEINGHPVKAFVDSGAQSTIMSTALAERTGLGRLVDKRFRGIARGVGKGEIIGRVHAAQVKIETQFIPCSFIVLDTNVDLLLGLDMLRRYQACVDLKENVLKIAGIVTPFLPEAEIPKHFDMDPSAEATNLPSTSPLGNQKAAPEARDAGVGSALLNRSTPATAERTHAEEDVRRLMDLGFSRAEVLKALDHSQGNAEYAAAFLFQ.

One can recognise a Ubiquitin-like domain in the interval 1 to 72; the sequence is MNVTVSNEVT…VGESLVVVKA (72 aa). Asp-279 is a catalytic residue. A disordered region spans residues 388 to 410; the sequence is MDPSAEATNLPSTSPLGNQKAAP. The segment covering 393-404 has biased composition (polar residues); sequence EATNLPSTSPLG. The 39-residue stretch at 434–472 folds into the UBA domain; that stretch reads HAEEDVRRLMDLGFSRAEVLKALDHSQGNAEYAAAFLFQ.

It belongs to the DDI1 family. Binds ubiquitin and polyubiquitinated proteins.

The protein localises to the cytoplasm. Probable aspartic protease. May be involved in the regulation of exocytosis. Acts as a linker between the 19S proteasome and polyubiquitinated proteins via UBA domain interactions with ubiquitin for their subsequent degradation. Required for S-phase checkpoint control. The sequence is that of DNA damage-inducible protein 1 (DDI1) from Eremothecium gossypii (strain ATCC 10895 / CBS 109.51 / FGSC 9923 / NRRL Y-1056) (Yeast).